We begin with the raw amino-acid sequence, 447 residues long: Methylenetetrahydrofolate--tRNA-(uracil-5-)-methyltransferase TrmFO (447 aa).

Residue 13–18 (GAGLAG) participates in FAD binding.

It belongs to the MnmG family. TrmFO subfamily. It depends on FAD as a cofactor.

It is found in the cytoplasm. It carries out the reaction uridine(54) in tRNA + (6R)-5,10-methylene-5,6,7,8-tetrahydrofolate + NADH + H(+) = 5-methyluridine(54) in tRNA + (6S)-5,6,7,8-tetrahydrofolate + NAD(+). The catalysed reaction is uridine(54) in tRNA + (6R)-5,10-methylene-5,6,7,8-tetrahydrofolate + NADPH + H(+) = 5-methyluridine(54) in tRNA + (6S)-5,6,7,8-tetrahydrofolate + NADP(+). Catalyzes the folate-dependent formation of 5-methyl-uridine at position 54 (M-5-U54) in all tRNAs. The polypeptide is Methylenetetrahydrofolate--tRNA-(uracil-5-)-methyltransferase TrmFO (Streptococcus thermophilus (strain ATCC BAA-250 / LMG 18311)).